The sequence spans 272 residues: MNRIALGLHYDGAAFSGWQSQPHRNTVQDHLEDAIERFAGVRLLTTVAGRTDAGVHALGQVIHLDTELVREPFSWVRGVNAFLPPSIALQWALPVDVGFHARFLAYERMYYYALYTGPHRVPMVHGRAGYQMLPPGQRLDVEAMRAAAAHLIGEHDFSAFRAAECQAKSPVKTMYDVTIRDDGNWVFLRFRASAFLHHMVRNLMGCLVAVGRRRYPPDWMAQVLAGRDRKLAAPTFMPDGLYLVGVKYPDAYPIPAADPSASLFHGVFDDAA.

The active-site Nucleophile is aspartate 52. Tyrosine 110 contributes to the substrate binding site.

It belongs to the tRNA pseudouridine synthase TruA family. Homodimer.

It carries out the reaction uridine(38/39/40) in tRNA = pseudouridine(38/39/40) in tRNA. Its function is as follows. Formation of pseudouridine at positions 38, 39 and 40 in the anticodon stem and loop of transfer RNAs. The sequence is that of tRNA pseudouridine synthase A from Cupriavidus taiwanensis (strain DSM 17343 / BCRC 17206 / CCUG 44338 / CIP 107171 / LMG 19424 / R1) (Ralstonia taiwanensis (strain LMG 19424)).